The following is a 511-amino-acid chain: Maturase K (511 aa).

Belongs to the intron maturase 2 family. MatK subfamily.

The protein localises to the plastid. It is found in the chloroplast. In terms of biological role, usually encoded in the trnK tRNA gene intron. Probably assists in splicing its own and other chloroplast group II introns. The polypeptide is Maturase K (Hordeum bulbosum (Bulbous barley)).